The primary structure comprises 358 residues: Phospho-N-acetylmuramoyl-pentapeptide-transferase (358 aa).

10 helical membrane passes run 27–47 (LFNN…SLFA), 81–101 (MGGV…TINL), 106–126 (LFLL…DDYL), 147–167 (VISI…PLVI), 171–191 (SWVI…LVGI), 201–221 (LDGL…TEIL), 228–248 (LFVF…FLKY), 255–275 (IFMG…IALL), 278–298 (SVFT…SVII), and 336–356 (IVEN…VLKI).

Belongs to the glycosyltransferase 4 family. MraY subfamily. Mg(2+) serves as cofactor.

The protein localises to the cell inner membrane. The catalysed reaction is UDP-N-acetyl-alpha-D-muramoyl-L-alanyl-gamma-D-glutamyl-meso-2,6-diaminopimeloyl-D-alanyl-D-alanine + di-trans,octa-cis-undecaprenyl phosphate = di-trans,octa-cis-undecaprenyl diphospho-N-acetyl-alpha-D-muramoyl-L-alanyl-D-glutamyl-meso-2,6-diaminopimeloyl-D-alanyl-D-alanine + UMP. The protein operates within cell wall biogenesis; peptidoglycan biosynthesis. Catalyzes the initial step of the lipid cycle reactions in the biosynthesis of the cell wall peptidoglycan: transfers peptidoglycan precursor phospho-MurNAc-pentapeptide from UDP-MurNAc-pentapeptide onto the lipid carrier undecaprenyl phosphate, yielding undecaprenyl-pyrophosphoryl-MurNAc-pentapeptide, known as lipid I. The chain is Phospho-N-acetylmuramoyl-pentapeptide-transferase from Prochlorococcus marinus (strain MIT 9215).